Reading from the N-terminus, the 393-residue chain is Elongation factor Tu (393 aa).

The tr-type G domain occupies 10–202; sequence KPHVNIGTIG…AVDEYIPTPE (193 aa). The segment at 19-26 is G1; that stretch reads GHVDHGKT. 19–26 provides a ligand contact to GTP; that stretch reads GHVDHGKT. Position 26 (threonine 26) interacts with Mg(2+). The tract at residues 60 to 64 is G2; that stretch reads GITIN. Positions 81 to 84 are G3; sequence DCPG. GTP contacts are provided by residues 81–85 and 136–139; these read DCPGH and NKAD. Positions 136-139 are G4; the sequence is NKAD. Residues 174–176 are G5; that stretch reads SAL.

It belongs to the TRAFAC class translation factor GTPase superfamily. Classic translation factor GTPase family. EF-Tu/EF-1A subfamily. In terms of assembly, monomer.

The protein resides in the cytoplasm. The catalysed reaction is GTP + H2O = GDP + phosphate + H(+). Functionally, GTP hydrolase that promotes the GTP-dependent binding of aminoacyl-tRNA to the A-site of ribosomes during protein biosynthesis. This is Elongation factor Tu from Clostridium novyi (strain NT).